A 367-amino-acid chain; its full sequence is Germination protease (367 aa).

The propeptide occupies 1-13 (MEEQQIPFQVRTD). The interval 267 to 287 (KDDPSKSLTPAGMSFGNRKLT) is disordered.

It belongs to the peptidase A25 family. As to quaternary structure, homotetramer. Post-translationally, autoproteolytically processed. The inactive tetrameric zymogen termed p46 autoprocesses to a smaller form termed p41, which is active only during spore germination.

It catalyses the reaction Endopeptidase action with P4 Glu or Asp, P1 preferably Glu &gt; Asp, P1' hydrophobic and P2' Ala.. Initiates the rapid degradation of small, acid-soluble proteins during spore germination. The chain is Germination protease from Oceanobacillus iheyensis (strain DSM 14371 / CIP 107618 / JCM 11309 / KCTC 3954 / HTE831).